Consider the following 124-residue polypeptide: Photoactive yellow protein (124 aa).

The region spanning 22-85 (AESLPFGAVL…GEFLKFNRTG (64 aa)) is the PAS domain. C68 carries the S-(4-hydroxycinnamyl)cysteine modification.

The protein belongs to the photoactive yellow protein family. Post-translationally, the 4-hydroxycinnamic acid (p-coumaric acid) chromophore is covalently bound via a thioester linkage.

This photoactive protein is a photoreceptor with kinetics similar to that of rhodopsin. The chain is Photoactive yellow protein (pyp) from Rhodobacter capsulatus (strain ATCC BAA-309 / NBRC 16581 / SB1003).